Reading from the N-terminus, the 365-residue chain is Chorismate synthase (365 aa).

2 residues coordinate NADP(+): R48 and R54. Residues 129 to 131, 241 to 242, G285, 300 to 304, and R326 contribute to the FMN site; these read RSS, NA, and KPTSS.

This sequence belongs to the chorismate synthase family. Homotetramer. FMNH2 is required as a cofactor.

It carries out the reaction 5-O-(1-carboxyvinyl)-3-phosphoshikimate = chorismate + phosphate. The protein operates within metabolic intermediate biosynthesis; chorismate biosynthesis; chorismate from D-erythrose 4-phosphate and phosphoenolpyruvate: step 7/7. Catalyzes the anti-1,4-elimination of the C-3 phosphate and the C-6 proR hydrogen from 5-enolpyruvylshikimate-3-phosphate (EPSP) to yield chorismate, which is the branch point compound that serves as the starting substrate for the three terminal pathways of aromatic amino acid biosynthesis. This reaction introduces a second double bond into the aromatic ring system. This is Chorismate synthase from Parvibaculum lavamentivorans (strain DS-1 / DSM 13023 / NCIMB 13966).